The sequence spans 454 residues: MMFSRFFKAVPARAPAFSSPLPVYQARTMATVRNQRPVERATFTIRDGPIFHGKSFGARTTISGEAVFTTSLVGYPESLTDPSYRGQILVFTQPLIGNYGVPSTERDRHGLLKYFESPNLQAAGVVVADVAEQYSHWTAVQSLGEWCAREGVPAISGVDTRAIVTYLREQGSSLARITVGEEYDADQDEAFTDPEQIHLVRQVSTKAPFHVSAADPQCHVAVLDCGVKENILRSLVSRGASITVFPFDYPIHKVAHHFDGVFISNGPGDPTHCQDTTYHLRRLMETSQVPIFGICLGHQLLALAAGARTVKLKYGNRAHNIPALDLTTGRCHITSQNHGYAVDASTLPSDWKPYFVNLNDSSNEGMIHKSRPIFSTQFHPEAKGGPLDSSYLFDIYIDSVKKYKNSQLAFHPSRETIPSPLLVDLLPKERVDVAPTIGMQNVAAAAAAAAAATA.

The transit peptide at 1 to 29 (MMFSRFFKAVPARAPAFSSPLPVYQARTM) directs the protein to the mitochondrion. Residues 219–406 (HVAVLDCGVK…IDSVKKYKNS (188 aa)) form the Glutamine amidotransferase type-1 domain. Residue C295 is the Nucleophile of the active site. Residues H379 and E381 contribute to the active site.

The protein belongs to the CarA family. In terms of assembly, heterodimer composed of 2 chains; the small (or glutamine) chain promotes the hydrolysis of glutamine to ammonia, which is used by the large (or ammonia) chain to synthesize carbamoyl phosphate.

It localises to the mitochondrion matrix. It catalyses the reaction hydrogencarbonate + L-glutamine + 2 ATP + H2O = carbamoyl phosphate + L-glutamate + 2 ADP + phosphate + 2 H(+). The enzyme catalyses L-glutamine + H2O = L-glutamate + NH4(+). Its pathway is amino-acid biosynthesis; L-arginine biosynthesis; carbamoyl phosphate from bicarbonate: step 1/1. Its function is as follows. Small subunit of the arginine-specific carbamoyl phosphate synthase (CPSase). CPSase catalyzes the formation of carbamoyl phosphate from the ammonia moiety of glutamine, carbonate, and phosphate donated by ATP, the first step of the arginine biosynthetic pathway. The small subunit (glutamine amidotransferase) binds and cleaves glutamine to supply the large subunit with the substrate ammonia. This is Carbamoyl phosphate synthase arginine-specific small chain (cpa-1) from Emericella nidulans (strain FGSC A4 / ATCC 38163 / CBS 112.46 / NRRL 194 / M139) (Aspergillus nidulans).